A 977-amino-acid chain; its full sequence is Glycine dehydrogenase (decarboxylating) (977 aa).

Lys702 carries the N6-(pyridoxal phosphate)lysine modification.

The protein belongs to the GcvP family. The glycine cleavage system is composed of four proteins: P, T, L and H. Pyridoxal 5'-phosphate is required as a cofactor.

The enzyme catalyses N(6)-[(R)-lipoyl]-L-lysyl-[glycine-cleavage complex H protein] + glycine + H(+) = N(6)-[(R)-S(8)-aminomethyldihydrolipoyl]-L-lysyl-[glycine-cleavage complex H protein] + CO2. Its function is as follows. The glycine cleavage system catalyzes the degradation of glycine. The P protein binds the alpha-amino group of glycine through its pyridoxal phosphate cofactor; CO(2) is released and the remaining methylamine moiety is then transferred to the lipoamide cofactor of the H protein. This chain is Glycine dehydrogenase (decarboxylating), found in Xanthomonas axonopodis pv. citri (strain 306).